A 546-amino-acid chain; its full sequence is Chaperonin GroEL 1 (546 aa).

Residues 29–32, 86–90, Gly414, and Asp499 each bind ATP; these read TLGP and DGTTT.

This sequence belongs to the chaperonin (HSP60) family. As to quaternary structure, forms a cylinder of 14 subunits composed of two heptameric rings stacked back-to-back. Interacts with the co-chaperonin GroES.

It is found in the cytoplasm. It carries out the reaction ATP + H2O + a folded polypeptide = ADP + phosphate + an unfolded polypeptide.. Its function is as follows. Together with its co-chaperonin GroES, plays an essential role in assisting protein folding. The GroEL-GroES system forms a nano-cage that allows encapsulation of the non-native substrate proteins and provides a physical environment optimized to promote and accelerate protein folding. This is Chaperonin GroEL 1 from Roseiflexus sp. (strain RS-1).